We begin with the raw amino-acid sequence, 502 residues long: ATP synthase subunit alpha (502 aa).

Residue Gly169 to Thr176 participates in ATP binding.

Belongs to the ATPase alpha/beta chains family. F-type ATPases have 2 components, CF(1) - the catalytic core - and CF(0) - the membrane proton channel. CF(1) has five subunits: alpha(3), beta(3), gamma(1), delta(1), epsilon(1). CF(0) has three main subunits: a(1), b(2) and c(9-12). The alpha and beta chains form an alternating ring which encloses part of the gamma chain. CF(1) is attached to CF(0) by a central stalk formed by the gamma and epsilon chains, while a peripheral stalk is formed by the delta and b chains.

It is found in the cell membrane. It carries out the reaction ATP + H2O + 4 H(+)(in) = ADP + phosphate + 5 H(+)(out). Its function is as follows. Produces ATP from ADP in the presence of a proton gradient across the membrane. The alpha chain is a regulatory subunit. This chain is ATP synthase subunit alpha, found in Priestia megaterium (strain ATCC 12872 / QMB1551) (Bacillus megaterium).